We begin with the raw amino-acid sequence, 201 residues long: Proteasome subunit beta 1 (201 aa).

A propeptide (removed in mature form; by autocatalysis) is located at residue Met1. The active-site Nucleophile is the Thr2.

Belongs to the peptidase T1B family. The 20S proteasome core is composed of 14 alpha and 14 beta subunits that assemble into four stacked heptameric rings, resulting in a barrel-shaped structure. The two inner rings, each composed of seven catalytic beta subunits, are sandwiched by two outer rings, each composed of seven alpha subunits. The catalytic chamber with the active sites is on the inside of the barrel. Has a gated structure, the ends of the cylinder being occluded by the N-termini of the alpha-subunits. Is capped at one or both ends by the proteasome regulatory ATPase, PAN.

Its subcellular location is the cytoplasm. It carries out the reaction Cleavage of peptide bonds with very broad specificity.. The formation of the proteasomal ATPase PAN-20S proteasome complex, via the docking of the C-termini of PAN into the intersubunit pockets in the alpha-rings, triggers opening of the gate for substrate entry. Interconversion between the open-gate and close-gate conformations leads to a dynamic regulation of the 20S proteasome proteolysis activity. Component of the proteasome core, a large protease complex with broad specificity involved in protein degradation. In Pyrobaculum calidifontis (strain DSM 21063 / JCM 11548 / VA1), this protein is Proteasome subunit beta 1.